A 512-amino-acid polypeptide reads, in one-letter code: Threonine synthase (512 aa).

Lys-121 bears the N6-(pyridoxal phosphate)lysine mark. Residues Gly-273, Asn-274, Phe-275, Asp-277, and Thr-445 each coordinate pyridoxal 5'-phosphate.

The protein belongs to the threonine synthase family. It depends on pyridoxal 5'-phosphate as a cofactor.

It catalyses the reaction O-phospho-L-homoserine + H2O = L-threonine + phosphate. It participates in amino-acid biosynthesis; L-threonine biosynthesis; L-threonine from L-aspartate: step 5/5. Functionally, catalyzes the gamma-elimination of phosphate from L-phosphohomoserine and the beta-addition of water to produce L-threonine. In Eremothecium gossypii (strain ATCC 10895 / CBS 109.51 / FGSC 9923 / NRRL Y-1056) (Yeast), this protein is Threonine synthase (THR4).